Here is a 290-residue protein sequence, read N- to C-terminus: 33 kDa chaperonin (290 aa).

Cystine bridges form between Cys235–Cys237 and Cys268–Cys271.

This sequence belongs to the HSP33 family. Post-translationally, under oxidizing conditions two disulfide bonds are formed involving the reactive cysteines. Under reducing conditions zinc is bound to the reactive cysteines and the protein is inactive.

Its subcellular location is the cytoplasm. Its function is as follows. Redox regulated molecular chaperone. Protects both thermally unfolding and oxidatively damaged proteins from irreversible aggregation. Plays an important role in the bacterial defense system toward oxidative stress. The sequence is that of 33 kDa chaperonin from Streptococcus pyogenes serotype M12 (strain MGAS2096).